The following is a 403-amino-acid chain: GPI mannosyltransferase 1 (403 aa).

The Cytoplasmic segment spans residues 1-4 (MTGE). The chain crosses the membrane as a helical span at residues 5–25 (EWGLTVLSFLVRVGFFLFGIY). Residues 26–78 (QDANFKVRYTDIDYFVFHDAAKYVYEGKSPYARDTYRYTPLLSWLLVPNHYFG) are Lumenal-facing. The helical transmembrane segment at 79–99 (WFHLGKVIFVIFDLVTGLIIM) threads the bilayer. Residues 100–110 (KLLNQAISRKR) lie on the Cytoplasmic side of the membrane. Residues 111–131 (ALILESIWLLNPMVITISTRG) traverse the membrane as a helical segment. Residue asparagine 132 is a topological domain, lumenal. A helical transmembrane segment spans residues 133–149 (AESVLCCLIMFTLFFLQ). The Cytoplasmic portion of the chain corresponds to 150–160 (KSRYTLAGILY). A helical membrane pass occupies residues 161 to 181 (GLSIHFKIYPIIYCIPIAIFI). The Lumenal segment spans residues 182–193 (YYNKRNQGPRTQ). The chain crosses the membrane as a helical span at residues 194–214 (LTSLLNIGLSTLTTLLGCGWA). The Cytoplasmic portion of the chain corresponds to 215–266 (MYKIYGYEFLDQAYLYHLYRTDHRHNFSVWNMLLYLDSANKENGESNLSRYA). The helical transmembrane segment at 267–287 (FVPQLLLVLVTGCLEWWNPTF) threads the bilayer. At 288 to 310 (DNLLRVLFVQTFAFVTYNKVCTS) the chain is on the lumenal side. The helical transmembrane segment at 311–331 (QYFVWYLIFLPFYLSRTHIGW) threads the bilayer. Topologically, residues 332–334 (KKG) are cytoplasmic. Residues 335 to 355 (LLMATLWVGTQGIWLSQGYYL) traverse the membrane as a helical segment. Topologically, residues 356-361 (EFEGKN) are lumenal. Residues 362–382 (VFYPGLFIASVLFFVTNVWLL) traverse the membrane as a helical segment. Topologically, residues 383 to 403 (GQFITDIKIPTQPTVSNKKNN) are cytoplasmic.

The protein belongs to the PIGM family.

It is found in the endoplasmic reticulum membrane. The protein operates within glycolipid biosynthesis; glycosylphosphatidylinositol-anchor biosynthesis. Its function is as follows. Mannosyltransferase involved in glycosylphosphatidylinositol-anchor biosynthesis. Transfers the first alpha-1,4-mannose to GlcN-acyl-PI during GPI precursor assembly. Required for cell wall integrity. The protein is GPI mannosyltransferase 1 (GPI14) of Saccharomyces cerevisiae (strain ATCC 204508 / S288c) (Baker's yeast).